The sequence spans 353 residues: Phospho-N-acetylmuramoyl-pentapeptide-transferase (353 aa).

Helical transmembrane passes span 24-44, 66-86, 88-108, 129-149, 160-180, 192-212, 229-249, 256-276, 281-301, and 330-350; these read LGFFIAFFLTLFLMPKFILWA, TPTMGGIVFVFATIVASVLCA, LSNLYVLLGIIVLVGFSFVGF, FGMLFILSLIVSVLLSLKGLD, PLFEMPTMLAVGFWVLVFLST, GLASVPSIFTLLSLSIFVYVA, VGELFVISLALVGSLFGFLWY, VFMGDSGSLAIGGFIAYNAIV, ILLVLMGSIFVIETLSVILQV, and KVIVRFWIISMLSNLVALLSL.

Belongs to the glycosyltransferase 4 family. MraY subfamily. Mg(2+) serves as cofactor.

The protein localises to the cell inner membrane. The catalysed reaction is UDP-N-acetyl-alpha-D-muramoyl-L-alanyl-gamma-D-glutamyl-meso-2,6-diaminopimeloyl-D-alanyl-D-alanine + di-trans,octa-cis-undecaprenyl phosphate = di-trans,octa-cis-undecaprenyl diphospho-N-acetyl-alpha-D-muramoyl-L-alanyl-D-glutamyl-meso-2,6-diaminopimeloyl-D-alanyl-D-alanine + UMP. The protein operates within cell wall biogenesis; peptidoglycan biosynthesis. Functionally, catalyzes the initial step of the lipid cycle reactions in the biosynthesis of the cell wall peptidoglycan: transfers peptidoglycan precursor phospho-MurNAc-pentapeptide from UDP-MurNAc-pentapeptide onto the lipid carrier undecaprenyl phosphate, yielding undecaprenyl-pyrophosphoryl-MurNAc-pentapeptide, known as lipid I. The protein is Phospho-N-acetylmuramoyl-pentapeptide-transferase of Helicobacter pylori (strain J99 / ATCC 700824) (Campylobacter pylori J99).